We begin with the raw amino-acid sequence, 444 residues long: Methylenetetrahydrofolate--tRNA-(uracil-5-)-methyltransferase TrmFO (444 aa).

10–15 (GAGLAG) contacts FAD.

The protein belongs to the MnmG family. TrmFO subfamily. The cofactor is FAD.

The protein resides in the cytoplasm. It carries out the reaction uridine(54) in tRNA + (6R)-5,10-methylene-5,6,7,8-tetrahydrofolate + NADH + H(+) = 5-methyluridine(54) in tRNA + (6S)-5,6,7,8-tetrahydrofolate + NAD(+). The catalysed reaction is uridine(54) in tRNA + (6R)-5,10-methylene-5,6,7,8-tetrahydrofolate + NADPH + H(+) = 5-methyluridine(54) in tRNA + (6S)-5,6,7,8-tetrahydrofolate + NADP(+). Catalyzes the folate-dependent formation of 5-methyl-uridine at position 54 (M-5-U54) in all tRNAs. The sequence is that of Methylenetetrahydrofolate--tRNA-(uracil-5-)-methyltransferase TrmFO from Streptococcus suis (strain 98HAH33).